A 472-amino-acid chain; its full sequence is Threonine synthase-like 2 (472 aa).

K113 is subject to N6-(pyridoxal phosphate)lysine.

Belongs to the threonine synthase family. Pyridoxal 5'-phosphate is required as a cofactor.

Functionally, acts as a catabolic phospho-lyase on both gamma- and beta-phosphorylated substrates. Degrades O-phospho-threonine (PThr) to alpha-ketobutyrate, ammonia and phosphate. This chain is Threonine synthase-like 2 (thnsl2), found in Xenopus laevis (African clawed frog).